Here is a 220-residue protein sequence, read N- to C-terminus: Adenylate kinase (220 aa).

10–15 (GSGKST) serves as a coordination point for ATP. The NMP stretch occupies residues 30-59 (ASGDIIRAEIKARTPLGIEMERYLSRGDLI). Residues Arg36, 57–59 (DLI), 83–86 (GYPR), and Gln90 each bind AMP. An LID region spans residues 124–161 (GRRICSKCGAVYHVEFNPPKVPGKCDICGGELIQRPDD). Arg125 serves as a coordination point for ATP. Zn(2+)-binding residues include Cys128 and Cys131. ATP is bound at residue 134–135 (VY). Residues Cys148 and Cys151 each contribute to the Zn(2+) site. AMP is bound by residues Arg158 and Arg169. Gly197 lines the ATP pocket.

The protein belongs to the adenylate kinase family. As to quaternary structure, monomer.

It localises to the cytoplasm. It carries out the reaction AMP + ATP = 2 ADP. It participates in purine metabolism; AMP biosynthesis via salvage pathway; AMP from ADP: step 1/1. In terms of biological role, catalyzes the reversible transfer of the terminal phosphate group between ATP and AMP. Plays an important role in cellular energy homeostasis and in adenine nucleotide metabolism. The sequence is that of Adenylate kinase from Pyrococcus abyssi (strain GE5 / Orsay).